We begin with the raw amino-acid sequence, 227 residues long: Cytochrome c biogenesis ATP-binding export protein CcmA (227 aa).

The 202-residue stretch at 26–227 folds into the ABC transporter domain; that stretch reads LAASGLGFSR…ARTLRLDARS (202 aa). 58–65 contacts ATP; that stretch reads GANGSGKT.

This sequence belongs to the ABC transporter superfamily. CcmA exporter (TC 3.A.1.107) family. As to quaternary structure, the complex is composed of two ATP-binding proteins (CcmA) and two transmembrane proteins (CcmB).

It localises to the cell inner membrane. The catalysed reaction is heme b(in) + ATP + H2O = heme b(out) + ADP + phosphate + H(+). Part of the ABC transporter complex CcmAB involved in the biogenesis of c-type cytochromes; once thought to export heme, this seems not to be the case, but its exact role is uncertain. Responsible for energy coupling to the transport system. The sequence is that of Cytochrome c biogenesis ATP-binding export protein CcmA from Cupriavidus necator (strain ATCC 17699 / DSM 428 / KCTC 22496 / NCIMB 10442 / H16 / Stanier 337) (Ralstonia eutropha).